Reading from the N-terminus, the 109-residue chain is Mannose-specific lectin (109 aa).

The region spanning 25-109 is the Bulb-type lectin domain; the sequence is MQEDCNLVLY…ARWATGTNIH (85 aa). Alpha-D-mannopyranose-binding residues include glutamine 26, aspartate 28, asparagine 30, tyrosine 34, aspartate 37, lysine 38, tryptophan 41, alanine 42, asparagine 44, glutamine 57, aspartate 59, asparagine 61, tyrosine 65, isoleucine 72, tryptophan 73, asparagine 76, asparagine 83, glutamine 89, aspartate 91, asparagine 93, tyrosine 97, and tryptophan 102. Cysteine 29 and cysteine 52 are oxidised to a cystine.

Homotetramer; antiparallel. As to expression, detected in bulbs (at protein level).

The protein localises to the secreted. Its activity is regulated as follows. Strongly inhibited by alpha-1,6-linked mannotriose. Inhibited by various oligosaccharides of P.pastoris mannan including, Man(alpha-l,6)Man-alpha-O-Me, Man(alpha-l,2)Man, Man(alpha-l,3)Man-alpha-O-Me, Man(alpha-l,2)Man, alpha-1,2-linked mannotriose, and Man(alpha-1,6)Glc, in order of decreasing potency. Weakly inhibited by elsinotetraose. Not inhibited by maltose or nigerose. In terms of biological role, D-mannose-binding lectin which binds alpha-D-linked mannose. Displays a high affinity for alpha-(1-6)-mannose oligomers. Able to interact with both terminal and internal alpha-D-mannosyl residues. Displays antiviral activity and therefore may contribute to defense against infections. The protein is Mannose-specific lectin of Narcissus pseudonarcissus (Daffodil).